Reading from the N-terminus, the 698-residue chain is RNA cytosine-C(5)-methyltransferase NSUN2 (698 aa).

Residues 1–10 are compositionally biased toward basic residues; it reads MGRKNRRNRQ. A disordered region spans residues 1–28; that stretch reads MGRKNRRNRQRRTEQRSPAEEERRKARE. Residues 11-28 show a composition bias toward basic and acidic residues; the sequence is RRTEQRSPAEEERRKARE. Residues 182 to 188, aspartate 213, aspartate 240, and aspartate 266 contribute to the S-adenosyl-L-methionine site; that span reads CAAPGSK. Catalysis depends on cysteine 319, which acts as the Nucleophile. The segment at 472–496 is disordered; that stretch reads AVDAENGETKPCTNQSGSSKTDSVC. A compositionally biased stretch (polar residues) spans 482-493; that stretch reads PCTNQSGSSKTD.

The protein belongs to the class I-like SAM-binding methyltransferase superfamily. RsmB/NOP family. TRM4 subfamily.

Its subcellular location is the nucleus. The protein localises to the nucleolus. The protein resides in the cytoplasm. It localises to the mitochondrion. It is found in the cytoskeleton. Its subcellular location is the spindle. The protein localises to the secreted. The protein resides in the extracellular exosome. It catalyses the reaction cytidine(48) in tRNA + S-adenosyl-L-methionine = 5-methylcytidine(48) in tRNA + S-adenosyl-L-homocysteine + H(+). The catalysed reaction is cytidine(49) in tRNA + S-adenosyl-L-methionine = 5-methylcytidine(49) in tRNA + S-adenosyl-L-homocysteine + H(+). It carries out the reaction cytidine(50) in tRNA + S-adenosyl-L-methionine = 5-methylcytidine(50) in tRNA + S-adenosyl-L-homocysteine + H(+). The enzyme catalyses cytidine(34) in tRNA precursor + S-adenosyl-L-methionine = 5-methylcytidine(34) in tRNA precursor + S-adenosyl-L-homocysteine + H(+). It catalyses the reaction a cytidine in mRNA + S-adenosyl-L-methionine = a 5-methylcytidine in mRNA + S-adenosyl-L-homocysteine + H(+). In terms of biological role, RNA cytosine C(5)-methyltransferase that methylates cytosine to 5-methylcytosine (m5C) in various RNAs, such as tRNAs, mRNAs and some long non-coding RNAs (lncRNAs). Involved in various processes, such as epidermal stem cell differentiation, testis differentiation and maternal to zygotic transition during early development: acts by increasing protein synthesis; cytosine C(5)-methylation promoting tRNA stability and preventing mRNA decay. Methylates cytosine to 5-methylcytosine (m5C) at positions 34 and 48 of intron-containing tRNA(Leu)(CAA) precursors, and at positions 48, 49 and 50 of tRNA(Gly)(GCC) precursors. tRNA methylation is required generation of RNA fragments derived from tRNAs (tRFs). Also mediates C(5)-methylation of mitochondrial tRNAs. Catalyzes cytosine C(5)-methylation of mRNAs, leading to stabilize them and prevent mRNA decay. Cytosine C(5)-methylation of mRNAs also regulates mRNA export. Also mediates cytosine C(5)-methylation of non-coding RNAs, such as vault RNAs (vtRNAs), promoting their processing into regulatory small RNAs. Required for proper spindle assembly and chromosome segregation, independently of its methyltransferase activity. This chain is RNA cytosine-C(5)-methyltransferase NSUN2, found in Xenopus laevis (African clawed frog).